The chain runs to 309 residues: Probable lipid kinase YegS-like (309 aa).

In terms of domain architecture, DAGKc spans 1–134; it reads MAPSHWRLIL…IDLLRIDADH (134 aa). ATP contacts are provided by residues Thr-39, 65–71, and Thr-96; that span reads GDGTLSE. 3 residues coordinate Mg(2+): Leu-219, Asp-222, and Leu-224. Glu-280 functions as the Proton acceptor in the catalytic mechanism.

The protein belongs to the diacylglycerol/lipid kinase family. YegS lipid kinase subfamily. Requires Mg(2+) as cofactor. Ca(2+) serves as cofactor.

The protein localises to the cytoplasm. Functionally, probably phosphorylates lipids; the in vivo substrate is unknown. This is Probable lipid kinase YegS-like from Xanthomonas campestris pv. campestris (strain 8004).